The following is a 233-amino-acid chain: Small ribosomal subunit protein uS2 (233 aa).

This sequence belongs to the universal ribosomal protein uS2 family.

The chain is Small ribosomal subunit protein uS2 from Prochlorococcus marinus (strain MIT 9312).